Reading from the N-terminus, the 241-residue chain is ATP synthase subunit a (241 aa).

A run of 5 helical transmembrane segments spans residues 30–50 (GQVF…VVVG), 91–111 (FIGT…LVPW), 128–148 (INTT…AGLS), 193–213 (LVVA…VMFL), and 214–234 (GLFT…YYIG).

This sequence belongs to the ATPase A chain family. As to quaternary structure, F-type ATPases have 2 components, CF(1) - the catalytic core - and CF(0) - the membrane proton channel. CF(1) has five subunits: alpha(3), beta(3), gamma(1), delta(1), epsilon(1). CF(0) has four main subunits: a, b, b' and c.

Its subcellular location is the cellular thylakoid membrane. Key component of the proton channel; it plays a direct role in the translocation of protons across the membrane. The protein is ATP synthase subunit a of Prochlorococcus marinus (strain MIT 9211).